Consider the following 86-residue polypeptide: Anti-adapter protein IraP (86 aa).

A coiled-coil region spans residues 1–36 (MKNLIAELLLKLAQKEEESKELCAQVEALEIIVTAM).

This sequence belongs to the IraP family. Interacts with RssB.

The protein localises to the cytoplasm. Its function is as follows. Inhibits RpoS proteolysis by regulating RssB activity, thereby increasing the stability of the sigma stress factor RpoS especially during phosphate starvation, but also in stationary phase and during nitrogen starvation. Its effect on RpoS stability is due to its interaction with RssB, which probably blocks the interaction of RssB with RpoS, and the consequent delivery of the RssB-RpoS complex to the ClpXP protein degradation pathway. This is Anti-adapter protein IraP from Shigella boydii serotype 4 (strain Sb227).